Consider the following 329-residue polypeptide: GTPase Obg (329 aa).

One can recognise an Obg domain in the interval 1–159 (MQFIDEAKIF…MWVWLHLKLL (159 aa)). An OBG-type G domain is found at 160-327 (SDVGLVGLPN…LLANILSELQ (168 aa)). GTP contacts are provided by residues 166 to 173 (GLPNAGKS), 191 to 195 (FTTLT), 212 to 215 (DIPG), 279 to 282 (TKTD), and 308 to 310 (SSY). Positions 173 and 193 each coordinate Mg(2+).

Belongs to the TRAFAC class OBG-HflX-like GTPase superfamily. OBG GTPase family. As to quaternary structure, monomer. Requires Mg(2+) as cofactor.

Its subcellular location is the cytoplasm. An essential GTPase which binds GTP, GDP and possibly (p)ppGpp with moderate affinity, with high nucleotide exchange rates and a fairly low GTP hydrolysis rate. Plays a role in control of the cell cycle, stress response, ribosome biogenesis and in those bacteria that undergo differentiation, in morphogenesis control. The chain is GTPase Obg from Orientia tsutsugamushi (strain Boryong) (Rickettsia tsutsugamushi).